The primary structure comprises 64 residues: Large ribosomal subunit protein uL29 (64 aa).

The protein belongs to the universal ribosomal protein uL29 family.

This Coprothermobacter proteolyticus (strain ATCC 35245 / DSM 5265 / OCM 4 / BT) protein is Large ribosomal subunit protein uL29.